A 220-amino-acid chain; its full sequence is Ribonuclease HII (220 aa).

The region spanning 16–216 is the RNase H type-2 domain; that stretch reads PVFAGIDEAG…VRPNPAAEEQ (201 aa). Residues Asp-22, Glu-23, and Asp-114 each contribute to the a divalent metal cation site.

Belongs to the RNase HII family. Mn(2+) is required as a cofactor. It depends on Mg(2+) as a cofactor.

It localises to the cytoplasm. The enzyme catalyses Endonucleolytic cleavage to 5'-phosphomonoester.. In terms of biological role, endonuclease that specifically degrades the RNA of RNA-DNA hybrids. The protein is Ribonuclease HII of Nitratidesulfovibrio vulgaris (strain ATCC 29579 / DSM 644 / CCUG 34227 / NCIMB 8303 / VKM B-1760 / Hildenborough) (Desulfovibrio vulgaris).